Reading from the N-terminus, the 53-residue chain is UPF0391 membrane protein SG0393 (53 aa).

The next 2 helical transmembrane spans lie at 4–24 (WGII…GGLA) and 27–47 (AAWA…ISLF).

The protein belongs to the UPF0391 family.

The protein resides in the cell membrane. This chain is UPF0391 membrane protein SG0393, found in Sodalis glossinidius (strain morsitans).